The primary structure comprises 339 residues: Cathepsin B (339 aa).

Residues Met-1–Ala-17 form the signal peptide. Residues His-18–Asp-79 constitute a propeptide, activation peptide. 6 cysteine pairs are disulfide-bonded: Cys-93–Cys-122, Cys-105–Cys-150, Cys-141–Cys-207, Cys-142–Cys-146, Cys-179–Cys-211, and Cys-187–Cys-198. The active site involves Cys-108. A glycan (N-linked (GlcNAc...) asparagine) is linked at Asn-192. The residue at position 220 (Lys-220) is an N6-acetyllysine. Residues His-278 and Asn-298 contribute to the active site. Positions Gln-334 to Phe-339 are excised as a propeptide.

It belongs to the peptidase C1 family. In terms of assembly, dimer of a heavy chain and a light chain cross-linked by a disulfide bond. Interacts with SRPX2. Directly interacts with SHKBP1. In terms of tissue distribution, expressed in thyroid epithelial cells.

The protein localises to the lysosome. It is found in the melanosome. It localises to the secreted. The protein resides in the extracellular space. Its subcellular location is the apical cell membrane. The catalysed reaction is Hydrolysis of proteins with broad specificity for peptide bonds. Preferentially cleaves -Arg-Arg-|-Xaa bonds in small molecule substrates (thus differing from cathepsin L). In addition to being an endopeptidase, shows peptidyl-dipeptidase activity, liberating C-terminal dipeptides.. Functionally, thiol protease which is believed to participate in intracellular degradation and turnover of proteins. Cleaves matrix extracellular phosphoglycoprotein MEPE. Involved in the solubilization of cross-linked TG/thyroglobulin in the thyroid follicle lumen. Has also been implicated in tumor invasion and metastasis. This is Cathepsin B (Ctsb) from Mus musculus (Mouse).